The sequence spans 215 residues: Large ribosomal subunit protein uL3 (215 aa).

A disordered region spans residues 136 to 155; the sequence is GVSISHRSHGSTGQRQDPGK. N5-methylglutamine is present on Q151.

Belongs to the universal ribosomal protein uL3 family. As to quaternary structure, part of the 50S ribosomal subunit. Forms a cluster with proteins L14 and L19. In terms of processing, methylated by PrmB.

Functionally, one of the primary rRNA binding proteins, it binds directly near the 3'-end of the 23S rRNA, where it nucleates assembly of the 50S subunit. This chain is Large ribosomal subunit protein uL3, found in Rickettsia africae (strain ESF-5).